We begin with the raw amino-acid sequence, 140 residues long: Ribosome maturation factor RimP (140 aa).

The protein belongs to the RimP family.

Its subcellular location is the cytoplasm. Functionally, required for maturation of 30S ribosomal subunits. In Campylobacter fetus subsp. fetus (strain 82-40), this protein is Ribosome maturation factor RimP.